A 480-amino-acid chain; its full sequence is Adenosylhomocysteinase (480 aa).

Threonine 63, aspartate 142, and glutamate 203 together coordinate substrate. 204 to 206 (TTT) lines the NAD(+) pocket. Substrate is bound by residues lysine 233 and aspartate 237. Residues asparagine 238, 267–272 (GYGDVG), glutamate 290, asparagine 325, 346–348 (IGH), and asparagine 394 each bind NAD(+).

This sequence belongs to the adenosylhomocysteinase family. NAD(+) serves as cofactor.

The protein resides in the cytoplasm. It carries out the reaction S-adenosyl-L-homocysteine + H2O = L-homocysteine + adenosine. Its pathway is amino-acid biosynthesis; L-homocysteine biosynthesis; L-homocysteine from S-adenosyl-L-homocysteine: step 1/1. In terms of biological role, may play a key role in the regulation of the intracellular concentration of adenosylhomocysteine. The sequence is that of Adenosylhomocysteinase from Xanthomonas oryzae pv. oryzae (strain PXO99A).